Consider the following 502-residue polypeptide: UPF0371 protein CLH_2534 (502 aa).

The protein belongs to the UPF0371 family.

In Clostridium botulinum (strain Alaska E43 / Type E3), this protein is UPF0371 protein CLH_2534.